Consider the following 364-residue polypeptide: Photoreceptor outer segment membrane glycoprotein 2 (364 aa).

Over 1–24 the chain is Cytoplasmic; that stretch reads MTVLKVKFTKTKRDKLAQILWILN. A helical membrane pass occupies residues 25–43; it reads WVSVVSGIILFSLGLFLKI. The Lumenal portion of the chain corresponds to 44 to 61; it reads EIKKRNEVMAKGDINSVP. The chain crosses the membrane as a helical span at residues 62–80; it reads NMLISVGVIACVVNFLGGK. The Cytoplasmic segment spans residues 81–99; the sequence is ICYDCSDANKFSRWKLIML. Residues 100–123 traverse the membrane as a helical segment; that stretch reads PYIICTFCFTFCILLGALMCYTMR. Residues 124 to 264 lie on the Lumenal side of the membrane; the sequence is NELEESLYLG…LEYYTAIMRS (141 aa). Asparagine 229 carries an N-linked (GlcNAc...) asparagine glycan. Residues 265–290 form a helical membrane-spanning segment; sequence IGIAALLIWLFELSVLIGVRYLQTAM. Over 291-364 the chain is Cytoplasmic; the sequence is KNVLLQGDLQ…VTAKSIPAAS (74 aa).

The protein belongs to the PRPH2/ROM1 family.

The protein localises to the membrane. This Gallus gallus (Chicken) protein is Photoreceptor outer segment membrane glycoprotein 2.